A 1849-amino-acid chain; its full sequence is Brefeldin A-inhibited guanine nucleotide-exchange protein 1 (1849 aa).

The segment at 2 to 224 (YEGKKTKNMF…QEAKQMEKER (223 aa)) is DCB; DCB:DCB and DCB:HUS domain interaction. A compositionally biased stretch (basic and acidic residues) spans 46 to 58 (AETEKQSPPHGEA). Disordered regions lie at residues 46 to 65 (AETE…SSTL), 216 to 301 (EAKQ…ADQA), and 350 to 413 (INVS…SPGA). S52, S286, S289, and S290 each carry phosphoserine. Composition is skewed to polar residues over residues 350–360 (INVSADGNNGT) and 394–409 (SVSS…SSGP). S397 and S410 each carry phosphoserine. Residues 557 to 577 (ADAQSVVDIYVNYDCDLNAAN) form an HUS; DCB:HUS domain interaction region. The disordered stretch occupies residues 634–687 (PNSQTTLGQEKPSEQETSEMKHPETINRYGSLNSLESTSSSGIGSYSTQMSGTD). A compositionally biased stretch (basic and acidic residues) spans 644–658 (KPSEQETSEMKHPET). The span at 664-684 (SLNSLESTSSSGIGSYSTQMS) shows a compositional bias: low complexity. In terms of domain architecture, SEC7 spans 709-840 (FTKKPKRGIQ…IIMLTTDLHS (132 aa)). The short motif at 711-715 (KKPKR) is the Nuclear localization signal (NLS) element. A phosphoserine mark is found at S1079, S1566, and S1569.

As to quaternary structure, homodimer. Interacts with ARFGEF2/BIG2; both proteins are probably part of the same or very similar macromolecular complexes. Interacts with FKBP2. Interacts with MYO9B. Interacts with PRKAR1A and PRKAR2A. Interacts with PPP1CC. Interacts with NCL, FBL, NUP62 and U3 small nucleolar RNA. Interacts with DPY30. Interacts with PDE3A. Interacts with KANK1. Interacts with TBC1D22A and TBC1D22B. Post-translationally, phosphorylated. In vitro phosphorylated by PKA reducing its GEF activity and dephosphorylated by phosphatase PP1. In terms of tissue distribution, abundantly expressed in kidney, somewhat less abundant in lung, spleen, and brain, and still less abundant in heart.

The protein resides in the cytoplasm. It is found in the perinuclear region. Its subcellular location is the golgi apparatus. The protein localises to the trans-Golgi network. It localises to the nucleus. The protein resides in the nucleolus. It is found in the nucleus matrix. Its subcellular location is the membrane. Its activity is regulated as follows. Inhibited by brefeldin A. In terms of biological role, promotes guanine-nucleotide exchange on ARF1 and ARF3. Promotes the activation of ARF1/ARF3 through replacement of GDP with GTP. Involved in vesicular trafficking. Required for the maintenance of Golgi structure; the function may be independent of its GEF activity. Required for the maturation of integrin beta-1 in the Golgi. Involved in the establishment and persistence of cell polarity during directed cell movement in wound healing. Proposed to act as A kinase-anchoring protein (AKAP) and may mediate crosstalk between Arf and PKA pathways. Inhibits GAP activity of MYO9B probably through competitive RhoA binding. The function in the nucleus remains to be determined. This is Brefeldin A-inhibited guanine nucleotide-exchange protein 1 (ARFGEF1) from Bos taurus (Bovine).